Here is a 470-residue protein sequence, read N- to C-terminus: Probable citrate synthase, mitochondrial (470 aa).

Catalysis depends on residues His297, His351, and Asp406.

The protein belongs to the citrate synthase family. As to quaternary structure, homodimer.

Its subcellular location is the mitochondrion matrix. The enzyme catalyses oxaloacetate + acetyl-CoA + H2O = citrate + CoA + H(+). Its pathway is carbohydrate metabolism; tricarboxylic acid cycle; isocitrate from oxaloacetate: step 1/2. In Leishmania infantum, this protein is Probable citrate synthase, mitochondrial.